The primary structure comprises 116 residues: uncharacterized protein (116 aa).

Disordered stretches follow at residues Met1–Asn26 and Glu74–Ile116. Residues Ser14–Asn26 are compositionally biased toward low complexity. Positions Glu74 to Glu86 are enriched in basic and acidic residues. Residues Asn104–Ile116 are compositionally biased toward polar residues.

This is an uncharacterized protein from Saccharomyces cerevisiae (strain ATCC 204508 / S288c) (Baker's yeast).